Reading from the N-terminus, the 417-residue chain is Monooxygenase cfoF (417 aa).

Residues 45-48 (DRDK), R126, and D327 contribute to the FAD site. The span at 389-399 (AHTTQLDRDQF) shows a compositional bias: basic and acidic residues. Residues 389–417 (AHTTQLDRDQFTDGSGANDFLVGQQHSDK) form a disordered region.

This sequence belongs to the aromatic-ring hydroxylase family. KMO subfamily. It depends on FAD as a cofactor.

It participates in secondary metabolite biosynthesis; flavonoid biosynthesis. Monooxygenase; part of the gene cluster that mediates the biosynthesis of chlorflavonin, a fungal flavonoid with acetolactate synthase inhibitory activity. Within the pathway, cfoF is responsible for the hydroxylation of the flavonoid skeleton at position C3. The pathway begins with the PKS-NRPS hybrid synthetase cfoA that uses benzoic acid or p-hydroxybenzoic acid as a starter unit with four rounds of chain elongation using malonyl-CoA to form the chalcone skeleton. Then, a new type of chalcone isomerase, cfoK, catalyzes the conversion of the chalcone into a flavanone by a histidine-mediated oxa-Michael addition mechanism. The desaturation of flavanone to flavone is catalyzed by a new type of flavone synthase, the flavin mononucleotide (FMN)-dependent oxidoreductase cfoJ. Monooxygenases cfoF, cfoG, and P450 cfoH are responsible for the hydroxylation of the flavonoid skeleton at sites C3, C8, and C2', respectively. Like cfoF, the dehydratase cfoI plays also a role in the hydroxylation of position C3. Methyltransferases cfoB, cfoC, and cfoD then catalyze the methylation of C7-OH, C8-OH, and C3-OH, respectively. Finally, the monooxygenase cfoE is responsible for the chlorination of flavonoid at position C3'. This chain is Monooxygenase cfoF, found in Aspergillus candidus.